Consider the following 475-residue polypeptide: MSPKTETKASVGFKAGVKDYRLTYYTPEYQTKDTDILAAFRVTPQPGVPPEEAGAAVAAESSTGTWTTVWTDGLTSLDRYKGRCYDIEPVPGEESQFIAYVAYPLDLFEEGSVTNLFTSIVGNVFGFKALRALRLEDLRIPPAYSKTFQGPPHGIQVERDKLNKYGRPLLGCTIKPKLGLSAKNYGRAVYECLRGGLDFTKDDENVNSQPFMRWRDRFVFCAEAIYKAQAETGEIKGHYLNATAGTCEEMMKRAIFARELGVPIVMHDYLTGGFTANTSLAHYCRDNGLLLHIHRAMHAVIDRQRNHGMHFRVLAKALRMSGGDHIHAGTVVGKLEGERDVTLGFVDLLRDDFIEKDRSRGIYFTQDWVSMPGVLPVASGGIHVWHMPALTEIFGDDSVLQFGGGTLGHPWGNAPGAVANRVALEACVQARNEGRDLAREGNEVIREASKWSPELAAACEIWKEIKFEFDTIDYL.

A propeptide spanning residues 1–2 (MS) is cleaved from the precursor. Proline 3 carries the N-acetylproline modification. At lysine 14 the chain carries N6,N6,N6-trimethyllysine. Substrate contacts are provided by asparagine 123 and threonine 173. Lysine 175 serves as the catalytic Proton acceptor. Lysine 177 lines the substrate pocket. Mg(2+)-binding residues include lysine 201, aspartate 203, and glutamate 204. N6-carboxylysine is present on lysine 201. Histidine 294 serves as the catalytic Proton acceptor. The substrate site is built by arginine 295, histidine 327, and serine 379.

Belongs to the RuBisCO large chain family. Type I subfamily. In terms of assembly, heterohexadecamer of 8 large chains and 8 small chains; disulfide-linked. The disulfide link is formed within the large subunit homodimers. Mg(2+) is required as a cofactor. The disulfide bond which can form in the large chain dimeric partners within the hexadecamer appears to be associated with oxidative stress and protein turnover.

It localises to the plastid. It is found in the chloroplast. It carries out the reaction 2 (2R)-3-phosphoglycerate + 2 H(+) = D-ribulose 1,5-bisphosphate + CO2 + H2O. It catalyses the reaction D-ribulose 1,5-bisphosphate + O2 = 2-phosphoglycolate + (2R)-3-phosphoglycerate + 2 H(+). Functionally, ruBisCO catalyzes two reactions: the carboxylation of D-ribulose 1,5-bisphosphate, the primary event in carbon dioxide fixation, as well as the oxidative fragmentation of the pentose substrate in the photorespiration process. Both reactions occur simultaneously and in competition at the same active site. This Pseudolarix amabilis (Golden larch) protein is Ribulose bisphosphate carboxylase large chain.